The primary structure comprises 515 residues: Bifunctional purine biosynthesis protein PurH (515 aa).

The MGS-like domain maps to 1-145; it reads MTKRVLISVS…KNHASVTVVV (145 aa).

The protein belongs to the PurH family.

The enzyme catalyses (6R)-10-formyltetrahydrofolate + 5-amino-1-(5-phospho-beta-D-ribosyl)imidazole-4-carboxamide = 5-formamido-1-(5-phospho-D-ribosyl)imidazole-4-carboxamide + (6S)-5,6,7,8-tetrahydrofolate. It carries out the reaction IMP + H2O = 5-formamido-1-(5-phospho-D-ribosyl)imidazole-4-carboxamide. The protein operates within purine metabolism; IMP biosynthesis via de novo pathway; 5-formamido-1-(5-phospho-D-ribosyl)imidazole-4-carboxamide from 5-amino-1-(5-phospho-D-ribosyl)imidazole-4-carboxamide (10-formyl THF route): step 1/1. It participates in purine metabolism; IMP biosynthesis via de novo pathway; IMP from 5-formamido-1-(5-phospho-D-ribosyl)imidazole-4-carboxamide: step 1/1. The polypeptide is Bifunctional purine biosynthesis protein PurH (Streptococcus pneumoniae serotype 19F (strain G54)).